Here is a 332-residue protein sequence, read N- to C-terminus: Glycerol-3-phosphate dehydrogenase [NAD(P)+] (332 aa).

Residues serine 11, tryptophan 12, arginine 32, arginine 33, and lysine 106 each coordinate NADPH. Sn-glycerol 3-phosphate-binding residues include lysine 106 and glycine 136. Alanine 140 lines the NADPH pocket. Residues lysine 191, aspartate 244, serine 254, arginine 255, and asparagine 256 each contribute to the sn-glycerol 3-phosphate site. The active-site Proton acceptor is lysine 191. Arginine 255 serves as a coordination point for NADPH. Positions 280 and 282 each coordinate NADPH.

This sequence belongs to the NAD-dependent glycerol-3-phosphate dehydrogenase family.

The protein localises to the cytoplasm. It catalyses the reaction sn-glycerol 3-phosphate + NAD(+) = dihydroxyacetone phosphate + NADH + H(+). It carries out the reaction sn-glycerol 3-phosphate + NADP(+) = dihydroxyacetone phosphate + NADPH + H(+). Its pathway is membrane lipid metabolism; glycerophospholipid metabolism. In terms of biological role, catalyzes the reduction of the glycolytic intermediate dihydroxyacetone phosphate (DHAP) to sn-glycerol 3-phosphate (G3P), the key precursor for phospholipid synthesis. This chain is Glycerol-3-phosphate dehydrogenase [NAD(P)+], found in Corynebacterium aurimucosum (strain ATCC 700975 / DSM 44827 / CIP 107346 / CN-1) (Corynebacterium nigricans).